A 121-amino-acid polypeptide reads, in one-letter code: Estrogen receptor (121 aa).

Residues 1 to 121 (LFAPNLLLDR…IRHMSNKGME (121 aa)) enclose the NR LBD domain. Cys45 carries S-palmitoyl cysteine lipidation.

Belongs to the nuclear hormone receptor family. NR3 subfamily. As to quaternary structure, binds DNA as a homodimer. Can form a heterodimer with ESR2. Interacts with coactivator NCOA5. Interacts with NCOA7; the interaction is ligand-inducible. Interacts with AKAP13, CUEDC2, HEXIM1, KDM5A, MAP1S, PELP1, SMARD1, and UBE1C. Interacts with MUC1; the interaction is stimulated by 7 beta-estradiol (E2) and enhances ERS1-mediated transcription. Interacts with DNTTIP2, and UIMC1. Interacts with KMT2D/MLL2. Interacts with ATAD2; the interaction is enhanced by estradiol. Interacts with KIF18A and LDB1. Interacts with RLIM (via its C-terminus). Interacts with MACROD1. Interacts with SH2D4A and PLCG. Interacts with SH2D4A; the interaction blocks binding to PLCG and inhibits estrogen-induced cell proliferation. Interacts with DYNLL1. Interacts with CCDC62; the interaction requires estradiol and appears to enhance the transcription of target genes. Interacts with NR2C1; the interaction prevents homodimerization of ESR1 and suppresses its transcriptional activity and cell growth. Interacts with DNAAF4. Interacts with PRMT2. Interacts with PI3KR1 or PIK3R2, SRC and PTK2/FAK1. Interacts with RBFOX2. Interacts with EP300; the interaction is estrogen-dependent and enhanced by CITED1. Interacts with CITED1; the interaction is estrogen-dependent. Interacts with FAM120B, FOXL2, PHB2 and SLC30A9. Interacts with coactivators NCOA3 and NCOA6. Interacts with STK3/MST2 only in the presence of SAV1 and vice-versa. Binds to CSNK1D. Interacts with NCOA2; NCOA2 can interact with ESR1 AF-1 and AF-2 domains simultaneously and mediate their transcriptional synergy. Interacts with DDX5. Interacts with NCOA1; the interaction seems to require a self-association of N-terminal and C-terminal regions. Interacts with ZNF366, DDX17, NFKB1, RELA, SP1 and SP3. Interacts with NRIP1. Interacts with GPER1; the interaction occurs in an estrogen-dependent manner. Interacts with CLOCK and the interaction is stimulated by estrogen. Interacts with TRIP4 (ufmylated); estrogen dependent. Interacts with LMTK3; the interaction phosphorylates ESR1 (in vitro) and protects it against proteasomal degradation. Interacts with CCAR2 (via N-terminus) in a ligand-independent manner. Interacts with ZFHX3. Interacts with SFR1 in a ligand-dependent and -independent manner. Interacts with DCAF13, LATS1 and DCAF1; regulates ESR1 ubiquitination and ubiquitin-mediated proteasomal degradation. Interacts (via DNA-binding domain) with POU4F2 (C-terminus); this interaction increases the estrogen receptor ESR1 transcriptional activity in a DNA- and ligand 17-beta-estradiol-independent manner. Interacts with ESRRB isoform 1. Interacts with UBE3A and WBP2. Interacts with GTF2B. Interacts with RBM39. In the absence of hormonal ligand, interacts with TACC1. Interacts with BAG1; the interaction is promoted in the absence of estradiol (17-beta-estradiol/E2). Interacts with and ubiquitinated by STUB1; the interaction is promoted in the absence of estradiol (17-beta-estradiol/E2). Interacts with NEDD8. In terms of processing, ubiquitinated; regulated by LATS1 via DCAF1 it leads to ESR1 proteasomal degradation. Deubiquitinated by OTUB1. Ubiquitinated by STUB1/CHIP; in the CA1 hippocampal region following loss of endogenous circulating estradiol (17-beta-estradiol/E2). Ubiquitinated by UBR5, leading to its degradation: UBR5 specifically recognizes and binds ligand-bound ESR1 when it is not associated with coactivators (NCOAs). In presence of NCOAs, the UBR5-degron is not accessible, preventing its ubiquitination and degradation. Palmitoylated at Cys-45 by ZDHHC7 and ZDHHC21. Palmitoylation is required for plasma membrane targeting and for rapid intracellular signaling via ERK and AKT kinases and cAMP generation, but not for signaling mediated by the nuclear hormone receptor. Post-translationally, phosphorylated by cyclin A/CDK2 and CK1. Phosphorylation probably enhances transcriptional activity. Dephosphorylation by PPP5C inhibits its transactivation activity. Phosphorylated by LMTK3 (in vitro). In terms of processing, dimethylated by PRMT1. Demethylated by JMJD6.

Its subcellular location is the nucleus. It is found in the cytoplasm. The protein resides in the golgi apparatus. The protein localises to the cell membrane. Functionally, nuclear hormone receptor. The steroid hormones and their receptors are involved in the regulation of eukaryotic gene expression and affect cellular proliferation and differentiation in target tissues. Ligand-dependent nuclear transactivation involves either direct homodimer binding to a palindromic estrogen response element (ERE) sequence or association with other DNA-binding transcription factors, such as AP-1/c-Jun, c-Fos, ATF-2, Sp1 and Sp3, to mediate ERE-independent signaling. Ligand binding induces a conformational change allowing subsequent or combinatorial association with multiprotein coactivator complexes through LXXLL motifs of their respective components. Mutual transrepression occurs between the estrogen receptor (ER) and NF-kappa-B in a cell-type specific manner. Decreases NF-kappa-B DNA-binding activity and inhibits NF-kappa-B-mediated transcription from the IL6 promoter and displace RELA/p65 and associated coregulators from the promoter. Recruited to the NF-kappa-B response element of the CCL2 and IL8 promoters and can displace CREBBP. Present with NF-kappa-B components RELA/p65 and NFKB1/p50 on ERE sequences. Can also act synergistically with NF-kappa-B to activate transcription involving respective recruitment adjacent response elements; the function involves CREBBP. Can activate the transcriptional activity of TFF1. Also mediates membrane-initiated estrogen signaling involving various kinase cascades. Essential for MTA1-mediated transcriptional regulation of BRCA1 and BCAS3. Maintains neuronal survival in response to ischemic reperfusion injury when in the presence of circulating estradiol (17-beta-estradiol/E2). The sequence is that of Estrogen receptor (ESR1) from Macaca mulatta (Rhesus macaque).